Consider the following 118-residue polypeptide: Large ribosomal subunit protein bL19 (118 aa).

It belongs to the bacterial ribosomal protein bL19 family.

This protein is located at the 30S-50S ribosomal subunit interface and may play a role in the structure and function of the aminoacyl-tRNA binding site. The chain is Large ribosomal subunit protein bL19 from Marinobacter nauticus (strain ATCC 700491 / DSM 11845 / VT8) (Marinobacter aquaeolei).